Here is a 754-residue protein sequence, read N- to C-terminus: FAD-dependent monooxygenase ntnA (754 aa).

Residues 3-23 form a helical membrane-spanning segment; the sequence is IPFKVLIIGGGVAGLTLAIML. Residues Glu-34, Gly-48, and Arg-109 each contribute to the FAD site. Tyr-218 is a catalytic residue. Residues Asp-311 and Ala-324 each coordinate FAD. The next 4 helical transmembrane spans lie at 446 to 466, 486 to 506, 536 to 556, and 563 to 583; these read PLAT…PWLA, AEVL…MWVI, ILPI…YYYM, and LGVA…SAVC. A glycan (N-linked (GlcNAc...) asparagine) is linked at Asn-586. The chain crosses the membrane as a helical span at residues 595–615; sequence SWWFTADFAFPVVAYLSGMFL. Residue Asn-616 is glycosylated (N-linked (GlcNAc...) asparagine). Helical transmembrane passes span 644–664 and 679–697; these read IAFV…TTIL and LASL…AWEL. Asn-701 is a glycosylation site (N-linked (GlcNAc...) asparagine). The chain crosses the membrane as a helical span at residues 712–732; that stretch reads LTILSSTIFGGPAATLAGTFI.

This sequence belongs to the paxM FAD-dependent monooxygenase family. The cofactor is FAD.

It is found in the membrane. It participates in secondary metabolite biosynthesis; terpenoid biosynthesis. Its function is as follows. FAD-dependent monooxygenase; part of the gene cluster that mediates the biosynthesis of the meroterpenoids nectripenoids A and B, as well as cochliquninone D and isocochliquninone E. The pathway probably begins with the HR-PKS ntnH that catalyzes two chain-extension steps to form a reduced triketide, which then primes the SAT domain in the NR-PKS ntnG to initiate three more cycles of extension to give a linear hexaketide corresponding to the polyketide part of nectripenoids. The FAD-dependent monooxygenase ntnJ then performs an oxidative decarboxylation at C11 of the ntnH/ntnG product, via an electrophilic aromatic hydroxylation with concomitant ipso-decarboxylation. The membrane-bound polyprenyl transferase ntnF then introduces a farnesyl group before the FAD-dependent monooxygenase ntnK functions as the first epoxidase on terminal C12'-C13' olefin, followed by a second epoxidation on C7'-C8' catalyzed by ntnA. The terpene cyclase/mutase ntnI then initiates the sequential tricyclic ring formation through protonation of the terminal epoxide and catalyzes the regioselective and stereoselective 6/6/6-tricyclic ring formation. The cytochrome P450 monooxygenase ntnM may then hydroxylate C1'. This is FAD-dependent monooxygenase ntnA from Nectria sp.